We begin with the raw amino-acid sequence, 51 residues long: Suberization-associated anionic peroxidase 1 (51 aa).

Residue His-30 participates in heme binding. Thr-31 contributes to the Ca(2+) binding site.

It belongs to the peroxidase family. Classical plant (class III) peroxidase subfamily. The cofactor is heme b. It depends on Ca(2+) as a cofactor.

Its subcellular location is the secreted. It carries out the reaction 2 a phenolic donor + H2O2 = 2 a phenolic radical donor + 2 H2O. In terms of biological role, removal of H(2)O(2), oxidation of toxic reductants, biosynthesis and degradation of lignin, suberization, auxin catabolism, response to environmental stresses such as wounding, pathogen attack and oxidative stress. These functions might be dependent on each isozyme/isoform in each plant tissue. Suggested to catalyze the deposition of the aromatic residues of suberin on the cell wall and thus play a role in cell-suberization. The protein is Suberization-associated anionic peroxidase 1 of Capsicum annuum (Capsicum pepper).